A 2327-amino-acid chain; its full sequence is Pre-mRNA-processing-splicing factor 8 homolog (2327 aa).

Positions 1-14 are enriched in polar residues; it reads MDDTNSNINQSNES. A disordered region spans residues 1–20; the sequence is MDDTNSNINQSNESQHLEEK. The segment at 801–1292 is reverse transcriptase homology domain; sequence TTVHWLEKRR…KIQTRVKIGL (492 aa). Residues 1293–1566 form a linker region; it reads NSKMPNRFPP…TLKISLIQIF (274 aa). Residues 1502 to 1515 are important for branch point selection; sequence MKYKKLTHAQRSGL. The segment at 1570-1740 is restriction endonuclease homology domain; the sequence is LWQKIHESLV…LRERIRKGLQ (171 aa). Residues 1657–2023 form an involved in interaction with pre-mRNA 5' splice site region; that stretch reads GDFDSHDIER…QIAEIEKQKT (367 aa). The tract at residues 1755 to 2008 is RNase H homology domain; that stretch reads NFGELFSNKI…ILGMEISAPS (254 aa). One can recognise an MPN domain in the interval 2093–2223; the sequence is TYVFPKNILK…LTAYHLTPSG (131 aa).

As to quaternary structure, part of the U5 snRNP complex and of the U4/U6-U5 tri-snRNP complex.

The protein resides in the nucleus speckle. Functions as a scaffold that mediates the ordered assembly of spliceosomal proteins and snRNAs. Required for the assembly of the U4/U6-U5 tri-snRNP complex. Functions as a scaffold that positions spliceosomal U2, U5 and U6 snRNAs at splice sites on pre-mRNA substrates, so that splicing can occur. Interacts with both the 5' and the 3' splice site. This is Pre-mRNA-processing-splicing factor 8 homolog (prpf8) from Dictyostelium discoideum (Social amoeba).